The primary structure comprises 975 residues: Glycine dehydrogenase (decarboxylating) (975 aa).

N6-(pyridoxal phosphate)lysine is present on lysine 702.

This sequence belongs to the GcvP family. The glycine cleavage system is composed of four proteins: P, T, L and H. Pyridoxal 5'-phosphate is required as a cofactor.

It catalyses the reaction N(6)-[(R)-lipoyl]-L-lysyl-[glycine-cleavage complex H protein] + glycine + H(+) = N(6)-[(R)-S(8)-aminomethyldihydrolipoyl]-L-lysyl-[glycine-cleavage complex H protein] + CO2. Its function is as follows. The glycine cleavage system catalyzes the degradation of glycine. The P protein binds the alpha-amino group of glycine through its pyridoxal phosphate cofactor; CO(2) is released and the remaining methylamine moiety is then transferred to the lipoamide cofactor of the H protein. The polypeptide is Glycine dehydrogenase (decarboxylating) (Xanthomonas campestris pv. campestris (strain 8004)).